A 122-amino-acid chain; its full sequence is Early nodulin-10 (122 aa).

Residues 1-36 (MTCTLKSPPKMASFFLSSLVLMFIAALILLPQGLAA) form the signal peptide. 10 consecutive repeat copies span residues 45-49 (PPDSE), 51-55 (PPYRN), 58-62 (PPFAL), 68-72 (APIYK), 77-81 (PPIYN), 82-86 (PPIYE), 88-92 (PPTYK), 99-103 (PPPFQ), 106-110 (PPFYK), and 113-117 (PPSQK). Residues 45–117 (PPDSELPPYR…FYKQAPPSQK (73 aa)) are 10 X 5 AA approximate repeats of P-P-X-X-X. The tract at residues 90 to 122 (TYKPSKKRLPPPFQKLPPFYKQAPPSQKLPRVN) is disordered.

As to expression, root nodules. In early nodules, expressed only in the interior of the developing nodule with no expression in other nodule tissues, including meristem. In slightly older nodules, expressed in almost all cells of the central zone. In more mature nodules, expression is restricted to the invasion zone.

The polypeptide is Early nodulin-10 (ENOD10) (Medicago sativa (Alfalfa)).